The sequence spans 382 residues: ATP phosphoribosyltransferase regulatory subunit (382 aa).

This sequence belongs to the class-II aminoacyl-tRNA synthetase family. HisZ subfamily. As to quaternary structure, heteromultimer composed of HisG and HisZ subunits.

It localises to the cytoplasm. The protein operates within amino-acid biosynthesis; L-histidine biosynthesis; L-histidine from 5-phospho-alpha-D-ribose 1-diphosphate: step 1/9. Required for the first step of histidine biosynthesis. May allow the feedback regulation of ATP phosphoribosyltransferase activity by histidine. In Lacticaseibacillus casei (strain BL23) (Lactobacillus casei), this protein is ATP phosphoribosyltransferase regulatory subunit.